The sequence spans 98 residues: Integration host factor subunit alpha (98 aa).

Residues 49-71 (FGNFDLRDKNQRPGRNPKTGEDI) are disordered.

Belongs to the bacterial histone-like protein family. Heterodimer of an alpha and a beta chain.

Functionally, this protein is one of the two subunits of integration host factor, a specific DNA-binding protein that functions in genetic recombination as well as in transcriptional and translational control. The polypeptide is Integration host factor subunit alpha (Pectobacterium atrosepticum (strain SCRI 1043 / ATCC BAA-672) (Erwinia carotovora subsp. atroseptica)).